Consider the following 174-residue polypeptide: ATP synthase subunit b (174 aa).

Residues 18–38 form a helical membrane-spanning segment; sequence IIVVSGSFLILMFLLKHFAWG.

This sequence belongs to the ATPase B chain family. F-type ATPases have 2 components, F(1) - the catalytic core - and F(0) - the membrane proton channel. F(1) has five subunits: alpha(3), beta(3), gamma(1), delta(1), epsilon(1). F(0) has three main subunits: a(1), b(2) and c(10-14). The alpha and beta chains form an alternating ring which encloses part of the gamma chain. F(1) is attached to F(0) by a central stalk formed by the gamma and epsilon chains, while a peripheral stalk is formed by the delta and b chains.

It localises to the cell membrane. In terms of biological role, f(1)F(0) ATP synthase produces ATP from ADP in the presence of a proton or sodium gradient. F-type ATPases consist of two structural domains, F(1) containing the extramembraneous catalytic core and F(0) containing the membrane proton channel, linked together by a central stalk and a peripheral stalk. During catalysis, ATP synthesis in the catalytic domain of F(1) is coupled via a rotary mechanism of the central stalk subunits to proton translocation. Its function is as follows. Component of the F(0) channel, it forms part of the peripheral stalk, linking F(1) to F(0). This is ATP synthase subunit b from Enterococcus hirae (strain ATCC 9790 / DSM 20160 / JCM 8729 / LMG 6399 / NBRC 3181 / NCIMB 6459 / NCDO 1258 / NCTC 12367 / WDCM 00089 / R).